We begin with the raw amino-acid sequence, 393 residues long: MGYYSLTEITAVQYAKDYGYFEEKANVICHEIGDGNLNYVFKLDDGEKSIIIKQALPYAKVVGESWPLSIKRATIESKALQIFAQYVPDYVPVVYSHDEELAITVIEDLSRLTITRKGLIDGEEYPLLSQHIGRFLAHVLFYTSDFGLQSEEKRILEGTFVNPDLCKITEDLVFTDPFGHYDTNDYEPDLQLVVDELWSDKTLKLKVAQYKYKFLTRKETLIHGDLHTGSIFSSPSETKVIDPEFATYGPFGFDIGQFIANLLLNALSREEEKRSVLFFHIEKTWSYFVETFTKLWIGEGVEAYTKEKQWLPIILQNIFTDAVGFAGCELIRRTIGLAHVADLDEIENKETRIQAKKQALSLGKELIKYESKSADIQLFRTLFQQTVSRGVKA.

Residues Asn38, Lys53, and 107–109 (EDL) contribute to the ATP site. Asp225 is a binding site for substrate. Residue 242-244 (DPE) coordinates ATP. Arg332 is a substrate binding site.

Belongs to the methylthioribose kinase family. In terms of assembly, homodimer.

The catalysed reaction is 5-(methylsulfanyl)-D-ribose + ATP = 5-(methylsulfanyl)-alpha-D-ribose 1-phosphate + ADP + H(+). It participates in amino-acid biosynthesis; L-methionine biosynthesis via salvage pathway; S-methyl-5-thio-alpha-D-ribose 1-phosphate from S-methyl-5'-thioadenosine (hydrolase route): step 2/2. Catalyzes the phosphorylation of methylthioribose into methylthioribose-1-phosphate. The chain is Methylthioribose kinase from Bacillus cereus (strain ATCC 14579 / DSM 31 / CCUG 7414 / JCM 2152 / NBRC 15305 / NCIMB 9373 / NCTC 2599 / NRRL B-3711).